We begin with the raw amino-acid sequence, 355 residues long: Holliday junction branch migration complex subunit RuvB (355 aa).

Residues 4-195 (TDKLTGADRL…FGIVARLEFY (192 aa)) are large ATPase domain (RuvB-L). Residues L34, R35, G76, K79, T80, T81, 142 to 144 (EDY), R185, Y195, and R232 contribute to the ATP site. T80 serves as a coordination point for Mg(2+). The interval 196-266 (TPDELARIVA…LADAALEMLD (71 aa)) is small ATPAse domain (RuvB-S). The head domain (RuvB-H) stretch occupies residues 269–355 (SVGFDLMDRK…DGGADLAEGL (87 aa)). 3 residues coordinate DNA: R305, R324, and R329.

The protein belongs to the RuvB family. As to quaternary structure, homohexamer. Forms an RuvA(8)-RuvB(12)-Holliday junction (HJ) complex. HJ DNA is sandwiched between 2 RuvA tetramers; dsDNA enters through RuvA and exits via RuvB. An RuvB hexamer assembles on each DNA strand where it exits the tetramer. Each RuvB hexamer is contacted by two RuvA subunits (via domain III) on 2 adjacent RuvB subunits; this complex drives branch migration. In the full resolvosome a probable DNA-RuvA(4)-RuvB(12)-RuvC(2) complex forms which resolves the HJ.

It localises to the cytoplasm. The enzyme catalyses ATP + H2O = ADP + phosphate + H(+). The RuvA-RuvB-RuvC complex processes Holliday junction (HJ) DNA during genetic recombination and DNA repair, while the RuvA-RuvB complex plays an important role in the rescue of blocked DNA replication forks via replication fork reversal (RFR). RuvA specifically binds to HJ cruciform DNA, conferring on it an open structure. The RuvB hexamer acts as an ATP-dependent pump, pulling dsDNA into and through the RuvAB complex. RuvB forms 2 homohexamers on either side of HJ DNA bound by 1 or 2 RuvA tetramers; 4 subunits per hexamer contact DNA at a time. Coordinated motions by a converter formed by DNA-disengaged RuvB subunits stimulates ATP hydrolysis and nucleotide exchange. Immobilization of the converter enables RuvB to convert the ATP-contained energy into a lever motion, pulling 2 nucleotides of DNA out of the RuvA tetramer per ATP hydrolyzed, thus driving DNA branch migration. The RuvB motors rotate together with the DNA substrate, which together with the progressing nucleotide cycle form the mechanistic basis for DNA recombination by continuous HJ branch migration. Branch migration allows RuvC to scan DNA until it finds its consensus sequence, where it cleaves and resolves cruciform DNA. The sequence is that of Holliday junction branch migration complex subunit RuvB from Cupriavidus metallidurans (strain ATCC 43123 / DSM 2839 / NBRC 102507 / CH34) (Ralstonia metallidurans).